The primary structure comprises 289 residues: Protease HtpX homolog (289 aa).

Transmembrane regions (helical) follow at residues 10 to 30 (TAALFGVLWAVLLGLGAVIGS) and 34 to 54 (STTPIWIMALVGVGTTAYGYW). Histidine 138 is a binding site for Zn(2+). Glutamate 139 is an active-site residue. Histidine 142 lines the Zn(2+) pocket. A run of 2 helical transmembrane segments spans residues 153–173 (VAAAVAGVITSVGQMLLIFGG) and 182–202 (LAVMAMALLAPLAAVVIQSAI). Glutamate 207 serves as a coordination point for Zn(2+).

This sequence belongs to the peptidase M48B family. Requires Zn(2+) as cofactor.

It is found in the cell membrane. The chain is Protease HtpX homolog from Arthrobacter sp. (strain FB24).